A 77-amino-acid chain; its full sequence is Small nuclear ribonucleoprotein G (77 aa).

A Sm domain is found at 4 to 76 (AGAPDLKKYL…VIMIETLDKM (73 aa)).

It belongs to the snRNP Sm proteins family. As to quaternary structure, belongs to the 40S cdc5-associated complex (or cwf complex), a spliceosome sub-complex reminiscent of a late-stage spliceosome composed of the U2, U5 and U6 snRNAs and at least brr2, cdc5, cwf2/prp3, cwf3/syf1, cwf4/syf3, cwf5/ecm2, spp42/cwf6, cwf7/spf27, cwf8, cwf9, cwf10, cwf11, cwf12, prp45/cwf13, cwf14, cwf15, cwf16, cwf17, cwf18, cwf19, cwf20, cwf21, cwf22, cwf23, cwf24, cwf25, cwf26, cyp7/cwf27, cwf28, cwf29/ist3, lea1, msl1, prp5/cwf1, prp10, prp12/sap130, prp17, prp22, sap61, sap62, sap114, sap145, slu7, smb1, smd1, smd3, smf1, smg1 and syf2.

Its subcellular location is the nucleus. It localises to the cytoplasm. Plays a role in pre-mRNA splicing as a core component of the spliceosomal U1, U2, U4 and U5 small nuclear ribonucleoproteins (snRNPs), the building blocks of the spliceosome. The protein is Small nuclear ribonucleoprotein G (smg1) of Schizosaccharomyces pombe (strain 972 / ATCC 24843) (Fission yeast).